A 76-amino-acid polypeptide reads, in one-letter code: MKLTCVVIVAVLFLTAWTFVTAAPHSSNALENLYLKAHHEMNNPEDSELNKRCYDSGTSCNTGNQCCSGWCIFVCL.

An N-terminal signal peptide occupies residues 1–22 (MKLTCVVIVAVLFLTAWTFVTA). The propeptide occupies 23–52 (APHSSNALENLYLKAHHEMNNPEDSELNKR). Intrachain disulfides connect C53–C67, C60–C71, and C66–C75.

It belongs to the conotoxin O1 superfamily. As to expression, expressed by the venom duct.

The protein localises to the secreted. Its function is as follows. Omega-conotoxins act at presynaptic membranes, they bind and block voltage-gated calcium channels (Cav). The protein is Omega-conotoxin-like TxO2 of Conus textile (Cloth-of-gold cone).